The following is a 393-amino-acid chain: Putative bacilysin exporter BacE (393 aa).

Helical transmembrane passes span 11-31, 43-63, 69-89, 92-112, 133-155, 160-177, 215-235, 244-264, 287-307, and 353-373; these read LLFG…ALLI, SGVI…GVLV, VKIM…LTFL, GEYP…GVFF, LFAK…FLLG, LAVA…FFIS, MFTM…FPIV, IGNF…AALV, ALFL…LFFI, and IVDA…LFLH.

It belongs to the major facilitator superfamily.

The protein localises to the cell membrane. Its function is as follows. Part of the bacilysin biosynthesis operon. May be involved in self-resistance to bacilysin by permitting efflux of this antibiotic. The chain is Putative bacilysin exporter BacE (bacE) from Bacillus subtilis.